We begin with the raw amino-acid sequence, 334 residues long: Aromatic O-demethylase, reductase subunit (334 aa).

One can recognise a 2Fe-2S ferredoxin-type domain in the interval 1-91 (MTFAVSVGGR…DTEVRSTADA (91 aa)). [2Fe-2S] cluster contacts are provided by cysteine 35, cysteine 40, cysteine 43, and cysteine 75. An FAD-binding FR-type domain is found at 98 to 198 (LRDLTATVLE…TGPLGDFHLP (101 aa)). FAD contacts are provided by residues 145–148 (RQYS), 162–164 (HVR), 170–172 (VAT), threonine 215, phenylalanine 330, and serine 334.

As to quaternary structure, monomer. Forms a heterodimer with GcoA. It depends on FAD as a cofactor. [2Fe-2S] cluster serves as cofactor.

It carries out the reaction 2 oxidized [cytochrome P450] + NADH = 2 reduced [cytochrome P450] + NAD(+) + H(+). It participates in aromatic compound metabolism. Part of a two-component P450 system that efficiently O-demethylates diverse aromatic substrates such as guaiacol and a wide variety of lignin-derived monomers. Is likely involved in lignin degradation, allowing Amycolatopsis sp. ATCC 39116 to catabolize plant biomass. GcoB transfers electrons from NADH to the cytochrome P450 subunit GcoA. Highly prefers NADH over NADPH as the electron donor. This Amycolatopsis sp. (strain ATCC 39116 / 75iv2) protein is Aromatic O-demethylase, reductase subunit.